We begin with the raw amino-acid sequence, 475 residues long: Protein ABCI7, chloroplastic (475 aa).

The transit peptide at 1–36 (MAAATVLGRLSLIPNLSSKPKLKSNRRTTSTSVSVR) directs the protein to the chloroplast.

In terms of assembly, interacts with NAP7.

It is found in the plastid. The protein resides in the chloroplast. The polypeptide is Protein ABCI7, chloroplastic (ABCI7) (Arabidopsis thaliana (Mouse-ear cress)).